A 1863-amino-acid polypeptide reads, in one-letter code: E3 ubiquitin-protein ligase ubr3 (1863 aa).

The segment at Thr80–Leu151 adopts a UBR-type zinc-finger fold. 3 disordered regions span residues Leu302–Lys330, Pro970–Phe995, and Ile1128–Glu1152. Composition is skewed to basic and acidic residues over residues Glu971–Thr984 and Ser1134–Glu1152. Residues Asp1270–Arg1328 form an RING-type; degenerate zinc finger.

This sequence belongs to the E3 ubiquitin-protein ligase UBR1-like family.

The catalysed reaction is S-ubiquitinyl-[E2 ubiquitin-conjugating enzyme]-L-cysteine + [acceptor protein]-L-lysine = [E2 ubiquitin-conjugating enzyme]-L-cysteine + N(6)-ubiquitinyl-[acceptor protein]-L-lysine.. Its pathway is protein modification; protein ubiquitination. Functionally, E3 ubiquitin-protein ligase which is a component of the N-end rule pathway. Recognizes and binds to proteins bearing specific N-terminal residues, leading to their ubiquitination and subsequent degradation. Positively regulates hedgehog/shh-signaling pathways that function in eye development, neuronal specification and somite development. Activation of shh up-regulates transcription of ubr3, which in turn promotes hedgehog/shh signaling possibly by controlling negative regulators such as Kif7. The polypeptide is E3 ubiquitin-protein ligase ubr3 (Danio rerio (Zebrafish)).